A 43-amino-acid polypeptide reads, in one-letter code: MEKALILSIFIFSLLLGITSYSIYISFGPLSKTLRDPFEEHEE.

The helical transmembrane segment at L5–I25 threads the bilayer.

Belongs to the PsbN family.

It is found in the plastid. The protein localises to the chloroplast thylakoid membrane. Functionally, may play a role in photosystem I and II biogenesis. The protein is Protein PsbN of Cyanidium caldarium (Red alga).